The sequence spans 1576 residues: Spermatogenesis-associated protein 31D1 (1576 aa).

A helical membrane pass occupies residues 29 to 49 (FICLSGLGLFILYLFYVVLTL). 5 disordered regions span residues 170 to 197 (FTLA…PPPP), 542 to 572 (HESP…QGQS), 782 to 801 (KDHL…RSNS), 952 to 1033 (SQGD…TDFQ), and 1293 to 1347 (RVSP…PPPE). A compositionally biased stretch (pro residues) spans 546 to 565 (VLPPPQPLSLPSTQPLPLPQ). Polar residues predominate over residues 966-980 (RSTFQGEKLGTTSSV). The segment covering 1004–1019 (QFSDTDHDLIETDSKD) has biased composition (basic and acidic residues). Positions 1020 to 1032 (GASTSLRRGTTDF) are enriched in polar residues.

The protein belongs to the SPATA31 family.

It localises to the membrane. Functionally, may play a role in spermatogenesis. This Homo sapiens (Human) protein is Spermatogenesis-associated protein 31D1 (SPATA31D1).